A 206-amino-acid polypeptide reads, in one-letter code: High frequency lysogenization protein HflD homolog (206 aa).

The protein belongs to the HflD family.

It localises to the cytoplasm. It is found in the cell inner membrane. The chain is High frequency lysogenization protein HflD homolog from Marinobacter nauticus (strain ATCC 700491 / DSM 11845 / VT8) (Marinobacter aquaeolei).